A 420-amino-acid chain; its full sequence is Sodium-dependent phosphate transport protein 4 (420 aa).

The interval 1-21 (MATKTELSPTARESKNAQDMQ) is disordered. N-linked (GlcNAc...) asparagine glycans are attached at residues Asn-49, Asn-60, Asn-68, and Asn-77. The next 8 helical transmembrane spans lie at 126 to 146 (SIAL…GGFI), 154 to 174 (FVFY…FVVI), 218 to 238 (IWSI…MVVY), 256 to 276 (LLSA…GYLA), 292 to 314 (IATI…LNSG), 319 to 341 (TALL…INVL), 357 to 377 (GFSS…LSQD), and 385 to 405 (VFFL…IFGE).

The protein belongs to the major facilitator superfamily. Sodium/anion cotransporter family. Expressed in the liver and kidney. It is detected in proximal tubules in renal cortex as well as some tubules and glomeruli, with highest expression at the apical side of proximal tubules (at protein level).

It localises to the endoplasmic reticulum membrane. The protein localises to the cell membrane. It carries out the reaction urate(in) + Na(+)(out) = urate(out) + Na(+)(in). Transports organic anions in a voltage-driven, multispecific, manner, on the apical side of renal proximal tubule. In particular, participates in the secretion of urate from the cell into the lumen. Urate is the end product of purine metabolism. May have roles in the metabolism and secretion of estrone sulfate, estradiol-17-beta-glucuronide, ochratoxin A, as wells as drugs such as bumetanide. This chain is Sodium-dependent phosphate transport protein 4 (SLC17A3), found in Homo sapiens (Human).